Consider the following 182-residue polypeptide: Transcription termination/antitermination protein NusG (182 aa).

This sequence belongs to the NusG family.

Functionally, participates in transcription elongation, termination and antitermination. The polypeptide is Transcription termination/antitermination protein NusG (Chlamydia pneumoniae (Chlamydophila pneumoniae)).